Reading from the N-terminus, the 486-residue chain is Ribosomal RNA small subunit methyltransferase F (486 aa).

Residues Ala122–Lys128, Glu146, Asp173, and Asp191 contribute to the S-adenosyl-L-methionine site. Cys244 functions as the Nucleophile in the catalytic mechanism.

The protein belongs to the class I-like SAM-binding methyltransferase superfamily. RsmB/NOP family.

It localises to the cytoplasm. It catalyses the reaction cytidine(1407) in 16S rRNA + S-adenosyl-L-methionine = 5-methylcytidine(1407) in 16S rRNA + S-adenosyl-L-homocysteine + H(+). Functionally, specifically methylates the cytosine at position 1407 (m5C1407) of 16S rRNA. This chain is Ribosomal RNA small subunit methyltransferase F, found in Shewanella loihica (strain ATCC BAA-1088 / PV-4).